The primary structure comprises 143 residues: Hemoglobin cathodic subunit alpha (143 aa).

N-acetylserine is present on Ser2. The region spanning 2–143 (SLTAKDKSLI…LGAALSDKYR (142 aa)) is the Globin domain. Residue His60 coordinates O2. His89 is a binding site for heme b.

Belongs to the globin family. In terms of assembly, heterotetramer of two alpha chains and two beta chains. In terms of tissue distribution, red blood cells.

Functionally, involved in oxygen transport from gills to the various peripheral tissues. This chain is Hemoglobin cathodic subunit alpha, found in Anguilla anguilla (European freshwater eel).